Consider the following 132-residue polypeptide: Hydrogenase maturation factor HypA (132 aa).

H2 provides a ligand contact to Ni(2+). 4 residues coordinate Zn(2+): C74, C77, C91, and C94.

Belongs to the HypA/HybF family.

Functionally, involved in the maturation of [NiFe] hydrogenases. Required for nickel insertion into the metal center of the hydrogenase. This Synechococcus sp. (strain JA-2-3B'a(2-13)) (Cyanobacteria bacterium Yellowstone B-Prime) protein is Hydrogenase maturation factor HypA.